We begin with the raw amino-acid sequence, 495 residues long: UDP-N-acetylmuramoyl-L-alanyl-D-glutamate--2,6-diaminopimelate ligase (495 aa).

Residues Leu27, Ser29, and 44-46 (HQA) contribute to the UDP-N-acetyl-alpha-D-muramoyl-L-alanyl-D-glutamate site. An ATP-binding site is contributed by 116 to 122 (GTNGKTT). UDP-N-acetyl-alpha-D-muramoyl-L-alanyl-D-glutamate contacts are provided by residues Asn157, 158 to 159 (TT), Ser185, Gln191, and Arg193. Lys225 is modified (N6-carboxylysine). Meso-2,6-diaminopimelate contacts are provided by residues Arg390, 414–417 (DNPR), Gly465, and Glu469. The Meso-diaminopimelate recognition motif motif lies at 414–417 (DNPR).

The protein belongs to the MurCDEF family. MurE subfamily. Mg(2+) serves as cofactor. Post-translationally, carboxylation is probably crucial for Mg(2+) binding and, consequently, for the gamma-phosphate positioning of ATP.

The protein localises to the cytoplasm. It catalyses the reaction UDP-N-acetyl-alpha-D-muramoyl-L-alanyl-D-glutamate + meso-2,6-diaminopimelate + ATP = UDP-N-acetyl-alpha-D-muramoyl-L-alanyl-gamma-D-glutamyl-meso-2,6-diaminopimelate + ADP + phosphate + H(+). It functions in the pathway cell wall biogenesis; peptidoglycan biosynthesis. Its function is as follows. Catalyzes the addition of meso-diaminopimelic acid to the nucleotide precursor UDP-N-acetylmuramoyl-L-alanyl-D-glutamate (UMAG) in the biosynthesis of bacterial cell-wall peptidoglycan. This Enterobacter sp. (strain 638) protein is UDP-N-acetylmuramoyl-L-alanyl-D-glutamate--2,6-diaminopimelate ligase.